The primary structure comprises 63 residues: U7-theraphotoxin-Cg1a (63 aa).

A signal peptide spans M1–A21. Residues I22–R31 constitute a propeptide that is removed on maturation. Cystine bridges form between C33-C47, C40-C52, and C46-C59.

In terms of tissue distribution, expressed by the venom gland.

It is found in the secreted. In terms of biological role, inhibits preferentially tetrodotoxin-insensitive sodium currents (Nav) on rat cardiac myocytes (IC(50) is 0.26 uM) and has weaker inhibition activity toward tetrodotoxin-sensitive sodium currents on rat dorsal root ganglion (DRG) sensory neurons (IC(50) is 0.83 uM) and on cockroach dorsal unpaired median (DUM) neurons (IC(50) is 1.19 uM). Has no significant effect on potassium currents on DRG neurons. The chain is U7-theraphotoxin-Cg1a from Chilobrachys guangxiensis (Chinese earth tiger tarantula).